The following is a 436-amino-acid chain: 3-ketoacyl-CoA thiolase (436 aa).

The active-site Acyl-thioester intermediate is the cysteine 99. Residues histidine 392 and cysteine 422 each act as proton acceptor in the active site.

This sequence belongs to the thiolase-like superfamily. Thiolase family. In terms of assembly, heterotetramer of two alpha chains (FadJ) and two beta chains (FadI).

The protein resides in the cytoplasm. It catalyses the reaction an acyl-CoA + acetyl-CoA = a 3-oxoacyl-CoA + CoA. It participates in lipid metabolism; fatty acid beta-oxidation. Catalyzes the final step of fatty acid oxidation in which acetyl-CoA is released and the CoA ester of a fatty acid two carbons shorter is formed. The sequence is that of 3-ketoacyl-CoA thiolase from Cronobacter sakazakii (strain ATCC BAA-894) (Enterobacter sakazakii).